The primary structure comprises 428 residues: Serine--tRNA ligase (428 aa).

L-serine is bound at residue 235-237; sequence TAE. 266–268 contacts ATP; the sequence is RSE. Glu-289 is a binding site for L-serine. Residue 353–356 participates in ATP binding; the sequence is EISS. Ser-389 contacts L-serine.

Belongs to the class-II aminoacyl-tRNA synthetase family. Type-1 seryl-tRNA synthetase subfamily. Homodimer. The tRNA molecule binds across the dimer.

It localises to the cytoplasm. The catalysed reaction is tRNA(Ser) + L-serine + ATP = L-seryl-tRNA(Ser) + AMP + diphosphate + H(+). The enzyme catalyses tRNA(Sec) + L-serine + ATP = L-seryl-tRNA(Sec) + AMP + diphosphate + H(+). It functions in the pathway aminoacyl-tRNA biosynthesis; selenocysteinyl-tRNA(Sec) biosynthesis; L-seryl-tRNA(Sec) from L-serine and tRNA(Sec): step 1/1. Functionally, catalyzes the attachment of serine to tRNA(Ser). Is also able to aminoacylate tRNA(Sec) with serine, to form the misacylated tRNA L-seryl-tRNA(Sec), which will be further converted into selenocysteinyl-tRNA(Sec). This is Serine--tRNA ligase from Shewanella halifaxensis (strain HAW-EB4).